Consider the following 399-residue polypeptide: Probable dual-specificity RNA methyltransferase RlmN (399 aa).

Residue Glu97 is the Proton acceptor of the active site. In terms of domain architecture, Radical SAM core spans 103 to 381; the sequence is YPDRATVCVS…CTVRVERGVS (279 aa). An intrachain disulfide couples Cys110 to Cys386. [4Fe-4S] cluster is bound by residues Cys117, Cys121, and Cys124. S-adenosyl-L-methionine is bound by residues 203–204, Ser235, 258–260, and Asn343; these read GE and SLH. Cys386 functions as the S-methylcysteine intermediate in the catalytic mechanism.

This sequence belongs to the radical SAM superfamily. RlmN family. It depends on [4Fe-4S] cluster as a cofactor.

It is found in the cytoplasm. It catalyses the reaction adenosine(2503) in 23S rRNA + 2 reduced [2Fe-2S]-[ferredoxin] + 2 S-adenosyl-L-methionine = 2-methyladenosine(2503) in 23S rRNA + 5'-deoxyadenosine + L-methionine + 2 oxidized [2Fe-2S]-[ferredoxin] + S-adenosyl-L-homocysteine. It carries out the reaction adenosine(37) in tRNA + 2 reduced [2Fe-2S]-[ferredoxin] + 2 S-adenosyl-L-methionine = 2-methyladenosine(37) in tRNA + 5'-deoxyadenosine + L-methionine + 2 oxidized [2Fe-2S]-[ferredoxin] + S-adenosyl-L-homocysteine. In terms of biological role, specifically methylates position 2 of adenine 2503 in 23S rRNA and position 2 of adenine 37 in tRNAs. This chain is Probable dual-specificity RNA methyltransferase RlmN, found in Roseiflexus sp. (strain RS-1).